The primary structure comprises 267 residues: Hydroxynaphthalene reductase-like protein Arp2 (267 aa).

Residues I25, N45, D71, and N98 each coordinate NADP(+). Active-site proton donor residues include S147 and S148. NADP(+) contacts are provided by Y162, K166, V195, and T197. Y162 serves as the catalytic Proton acceptor. K166 functions as the Lowers pKa of active site Tyr in the catalytic mechanism.

The protein belongs to the short-chain dehydrogenases/reductases (SDR) family.

Functionally, hydroxynaphthalene reductase-like protein; part of the Pks2 gene cluster that mediates the formation of infectious structures (appressoria), enabling these fungi to kill insects faster. The product of the Pks2 gene cluster is different from the one of Pks1 and has still not been identified. In Metarhizium guizhouense (strain ARSEF 977), this protein is Hydroxynaphthalene reductase-like protein Arp2.